Reading from the N-terminus, the 330-residue chain is Flotillin-like protein FloA (330 aa).

2 consecutive transmembrane segments (helical) span residues 6 to 26 (LFLL…FTFV) and 28 to 48 (VMLW…TLIG).

It belongs to the flotillin-like FloA family. Homooligomerizes.

It is found in the cell membrane. It localises to the membrane raft. Its function is as follows. Found in functional membrane microdomains (FMM) that may be equivalent to eukaryotic membrane rafts. FMMs are highly dynamic and increase in number as cells age. Flotillins are thought to be important factors in membrane fluidity. The sequence is that of Flotillin-like protein FloA from Bacillus licheniformis (strain ATCC 14580 / DSM 13 / JCM 2505 / CCUG 7422 / NBRC 12200 / NCIMB 9375 / NCTC 10341 / NRRL NRS-1264 / Gibson 46).